Here is a 166-residue protein sequence, read N- to C-terminus: Small ribosomal subunit protein uS5 (166 aa).

One can recognise an S5 DRBM domain in the interval 11–74 (LQEKLISVNR…DKARKNMIII (64 aa)).

Belongs to the universal ribosomal protein uS5 family. Part of the 30S ribosomal subunit. Contacts proteins S4 and S8.

In terms of biological role, with S4 and S12 plays an important role in translational accuracy. Its function is as follows. Located at the back of the 30S subunit body where it stabilizes the conformation of the head with respect to the body. This Wigglesworthia glossinidia brevipalpis protein is Small ribosomal subunit protein uS5.